A 242-amino-acid chain; its full sequence is Ubiquinone biosynthesis O-methyltransferase (242 aa).

Residues Arg-44, Gly-64, Asp-85, and Met-129 each contribute to the S-adenosyl-L-methionine site.

This sequence belongs to the methyltransferase superfamily. UbiG/COQ3 family.

The enzyme catalyses a 3-demethylubiquinol + S-adenosyl-L-methionine = a ubiquinol + S-adenosyl-L-homocysteine + H(+). It carries out the reaction a 3-(all-trans-polyprenyl)benzene-1,2-diol + S-adenosyl-L-methionine = a 2-methoxy-6-(all-trans-polyprenyl)phenol + S-adenosyl-L-homocysteine + H(+). It participates in cofactor biosynthesis; ubiquinone biosynthesis. Functionally, O-methyltransferase that catalyzes the 2 O-methylation steps in the ubiquinone biosynthetic pathway. This chain is Ubiquinone biosynthesis O-methyltransferase, found in Salmonella typhi.